A 261-amino-acid polypeptide reads, in one-letter code: Probable enoyl-CoA hydratase EchA17 (261 aa).

Belongs to the enoyl-CoA hydratase/isomerase family.

It catalyses the reaction a (3S)-3-hydroxyacyl-CoA = a (2E)-enoyl-CoA + H2O. The catalysed reaction is a 4-saturated-(3S)-3-hydroxyacyl-CoA = a (3E)-enoyl-CoA + H2O. Functionally, could possibly oxidize fatty acids using specific components. The protein is Probable enoyl-CoA hydratase EchA17 (echA17) of Mycobacterium bovis (strain BCG / Pasteur 1173P2).